Reading from the N-terminus, the 263-residue chain is MRIQRTPAPPKAPRALLCVHGAGCSPAIFRVQLSKLRAALREDFEFVYATAPFPSAPGPGILPTFEGLGPYYTWFEGSPSGAAAKGDNSNSNDSNSSPTVHDRLAAVHEPVRRAIAEWQTQNPSIPIVGTVSFSEGALVTALLLWQQQMGRIPWLPVMQVAMFICCWYQHEATQYMREEVGCGGDGGIDGEKLVIRGVLSLHLQGRDDFALAGSKMVVAQHFVPGEAQVLEFAGRHHFPNRPRDVLETVKRFRQLCVRARVIG.

Catalysis depends on charge relay system residues S134, D208, and H236.

Belongs to the LovG family.

The enzyme catalyses dihydromonacolin L-[lovastatin nonaketide synthase] + H2O = holo-[lovastatin nonaketide synthase] + dihydromonacolin L carboxylate + H(+). Its pathway is polyketide biosynthesis; lovastatin biosynthesis. Functionally, esterase; part of the gene cluster that mediates the biosynthesis of monakolin K, also known as lovastatin, and which acts as a potent competitive inhibitor of HMG-CoA reductase. Monakolin K biosynthesis is performed in two stages. The first stage is catalyzed by the nonaketide synthase mokA, which belongs to type I polyketide synthases and catalyzes the iterative nine-step formation of the polyketide. This PKS stage completed by the action of dehydrogenase mokE, which catalyzes the NADPH-dependent reduction of the unsaturated tetra-, penta- and heptaketide intermediates that arise during the mokA-mediated biosynthesis of the nonaketide chain and leads to dihydromonacolin L. Covalently bound dihydromonacolin L is released from mokA by the mokD esterase. Conversion of dihydromonacolin L into monacolin L and then monacolin J is subsequently performed with the participation of molecular oxygen and P450 monoogygenase mokC. Finally, mokF performs the conversion of monacoline J to monacoline K through the addition of the side-chain diketide moiety (2R)-2-methylbutanoate produced by the diketide synthase mokB. In Monascus pilosus (Red mold), this protein is Esterase mokD.